Consider the following 223-residue polypeptide: Large ribosomal subunit protein uL4c (223 aa).

Positions 61 to 96 are disordered; sequence TKTRSEVEGGGKKPWKQKGTGNARAGSSNSPLWKGG.

Belongs to the universal ribosomal protein uL4 family. Part of the 50S ribosomal subunit.

The protein localises to the plastid. Its subcellular location is the chloroplast. Its function is as follows. Probably binds the 23S rRNA. This is Large ribosomal subunit protein uL4c (rpl4) from Guillardia theta (Cryptophyte).